The primary structure comprises 88 residues: Long neurotoxin 20 (88 aa).

A signal peptide spans 1-21; that stretch reads MKTLLLTLVVVTIVCLDLGNS. Cystine bridges form between Cys24–Cys42, Cys35–Cys63, Cys48–Cys52, Cys67–Cys78, and Cys79–Cys84.

The protein belongs to the three-finger toxin family. Long-chain subfamily. Type II alpha-neurotoxin sub-subfamily. As to expression, expressed by the venom gland.

The protein resides in the secreted. Binds with high affinity to muscular (alpha-1/CHRNA1) and neuronal (alpha-7/CHRNA7) nicotinic acetylcholine receptor (nAChR) and inhibits acetylcholine from binding to the receptor, thereby impairing neuromuscular and neuronal transmission. The polypeptide is Long neurotoxin 20 (Drysdalia coronoides (White-lipped snake)).